Reading from the N-terminus, the 138-residue chain is MLQPTRLKYRKQQKGRNTGIATRGNKVSFGEFGLKAVGRGRLTARQIEAARRAMTRHIKRGGRIWIRVFPDKPITEKPIQVRMGGGKGNVEYYIAEIKPGKVLYEMDGVPEELAREAFELAAAKLPIPTTFVVRQVGQ.

Belongs to the universal ribosomal protein uL16 family. In terms of assembly, part of the 50S ribosomal subunit.

Functionally, binds 23S rRNA and is also seen to make contacts with the A and possibly P site tRNAs. This is Large ribosomal subunit protein uL16 from Neisseria gonorrhoeae (strain ATCC 700825 / FA 1090).